Consider the following 343-residue polypeptide: tRNA N6-adenosine threonylcarbamoyltransferase (343 aa).

Fe cation-binding residues include H115 and H119. Substrate is bound by residues 137–141, D170, G183, D187, and N276; that span reads LVSGG. D306 contacts Fe cation.

This sequence belongs to the KAE1 / TsaD family. It depends on Fe(2+) as a cofactor.

The protein localises to the cytoplasm. It catalyses the reaction L-threonylcarbamoyladenylate + adenosine(37) in tRNA = N(6)-L-threonylcarbamoyladenosine(37) in tRNA + AMP + H(+). Its function is as follows. Required for the formation of a threonylcarbamoyl group on adenosine at position 37 (t(6)A37) in tRNAs that read codons beginning with adenine. Is involved in the transfer of the threonylcarbamoyl moiety of threonylcarbamoyl-AMP (TC-AMP) to the N6 group of A37, together with TsaE and TsaB. TsaD likely plays a direct catalytic role in this reaction. The protein is tRNA N6-adenosine threonylcarbamoyltransferase of Limosilactobacillus reuteri (strain DSM 20016) (Lactobacillus reuteri).